A 389-amino-acid polypeptide reads, in one-letter code: Leucine aminopeptidase 1 (389 aa).

The first 18 residues, 1–18 (MKSAALLLPLYTAAFAAA), serve as a signal peptide directing secretion. A propeptide spanning residues 19–89 (AFHHEHAQAV…TLNHRINAES (71 aa)) is cleaved from the precursor. N-linked (GlcNAc...) asparagine glycosylation is found at asparagine 99, asparagine 146, and asparagine 156. Zn(2+) is bound by residues histidine 188, aspartate 207, glutamate 246, and aspartate 273. A disulfide bond links cysteine 322 and cysteine 326. Histidine 355 is a binding site for Zn(2+).

Belongs to the peptidase M28 family. M28E subfamily. As to quaternary structure, monomer. Zn(2+) is required as a cofactor.

Its subcellular location is the secreted. Functionally, extracellular aminopeptidase that allows assimilation of proteinaceous substrates. The protein is Leucine aminopeptidase 1 (lap1) of Pyrenophora tritici-repentis (strain Pt-1C-BFP) (Wheat tan spot fungus).